We begin with the raw amino-acid sequence, 248 residues long: Mannosylfructose-phosphate phosphatase (248 aa).

This sequence belongs to the sucrose phosphatase family.

The catalysed reaction is beta-D-fructofuranosyl alpha-D-mannopyranoside 6(F)-phosphate + H2O = beta-D-fructofuranosyl alpha-D-mannopyranoside + phosphate. Its pathway is carbohydrate metabolism; mannosylfructose biosynthesis; beta-D-fructofuranosyl alpha-D-mannopyranoside from D-fructose 6-phosphate and GDP-alpha-D-mannose: step 2/2. Its activity is regulated as follows. Inhibited by the phosphatase inhibitors fluoride, molybdate and orthovanadate. This chain is Mannosylfructose-phosphate phosphatase, found in Agrobacterium fabrum (strain C58 / ATCC 33970) (Agrobacterium tumefaciens (strain C58)).